A 941-amino-acid polypeptide reads, in one-letter code: Bifunctional glutamine synthetase adenylyltransferase/adenylyl-removing enzyme (941 aa).

The tract at residues Met1 to Pro437 is adenylyl removase. An adenylyl transferase region spans residues Pro444–Leu941.

This sequence belongs to the GlnE family. Requires Mg(2+) as cofactor.

The catalysed reaction is [glutamine synthetase]-O(4)-(5'-adenylyl)-L-tyrosine + phosphate = [glutamine synthetase]-L-tyrosine + ADP. It catalyses the reaction [glutamine synthetase]-L-tyrosine + ATP = [glutamine synthetase]-O(4)-(5'-adenylyl)-L-tyrosine + diphosphate. Its function is as follows. Involved in the regulation of glutamine synthetase GlnA, a key enzyme in the process to assimilate ammonia. When cellular nitrogen levels are high, the C-terminal adenylyl transferase (AT) inactivates GlnA by covalent transfer of an adenylyl group from ATP to specific tyrosine residue of GlnA, thus reducing its activity. Conversely, when nitrogen levels are low, the N-terminal adenylyl removase (AR) activates GlnA by removing the adenylyl group by phosphorolysis, increasing its activity. The regulatory region of GlnE binds the signal transduction protein PII (GlnB) which indicates the nitrogen status of the cell. This is Bifunctional glutamine synthetase adenylyltransferase/adenylyl-removing enzyme from Xanthomonas oryzae pv. oryzae (strain MAFF 311018).